The primary structure comprises 527 residues: Probable malate:quinone oxidoreductase (527 aa).

It belongs to the MQO family. FAD serves as cofactor.

It carries out the reaction (S)-malate + a quinone = a quinol + oxaloacetate. The protein operates within carbohydrate metabolism; tricarboxylic acid cycle; oxaloacetate from (S)-malate (quinone route): step 1/1. The chain is Probable malate:quinone oxidoreductase from Pectobacterium carotovorum subsp. carotovorum (strain PC1).